The sequence spans 67 residues: Small ribosomal subunit protein eS31 (67 aa).

Residues cysteine 35, cysteine 38, cysteine 54, and cysteine 57 each contribute to the Zn(2+) site. Residues cysteine 35–cysteine 57 form a C4-type zinc finger.

The protein belongs to the eukaryotic ribosomal protein eS31 family. In terms of assembly, part of the 30S ribosomal subunit. Zn(2+) is required as a cofactor.

In Sulfolobus acidocaldarius (strain ATCC 33909 / DSM 639 / JCM 8929 / NBRC 15157 / NCIMB 11770), this protein is Small ribosomal subunit protein eS31.